Here is a 33-residue protein sequence, read N- to C-terminus: Photosystem II reaction center protein Psb30 (33 aa).

The chain crosses the membrane as a helical span at residues 5–25 (VIAQLTVLALIVISGPLVIAL).

This sequence belongs to the Psb30/Ycf12 family. PSII is composed of 1 copy each of membrane proteins PsbA, PsbB, PsbC, PsbD, PsbE, PsbF, PsbH, PsbI, PsbJ, PsbK, PsbL, PsbM, PsbT, PsbX, PsbY, PsbZ, Psb30/Ycf12, peripheral proteins of the oxygen-evolving complex and a large number of cofactors. It forms dimeric complexes.

It localises to the plastid. The protein resides in the chloroplast thylakoid membrane. Its function is as follows. A core subunit of photosystem II (PSII), probably helps stabilize the reaction center. This is Photosystem II reaction center protein Psb30 from Huperzia lucidula (Shining clubmoss).